Reading from the N-terminus, the 299-residue chain is tRNA dimethylallyltransferase (299 aa).

13-20 (GPTASGKT) contributes to the ATP binding site. A substrate-binding site is contributed by 15–20 (TASGKT). Residues 38–41 (DSRQ) are interaction with substrate tRNA.

This sequence belongs to the IPP transferase family. As to quaternary structure, monomer. Mg(2+) is required as a cofactor.

It catalyses the reaction adenosine(37) in tRNA + dimethylallyl diphosphate = N(6)-dimethylallyladenosine(37) in tRNA + diphosphate. Its function is as follows. Catalyzes the transfer of a dimethylallyl group onto the adenine at position 37 in tRNAs that read codons beginning with uridine, leading to the formation of N6-(dimethylallyl)adenosine (i(6)A). This is tRNA dimethylallyltransferase from Prochlorococcus marinus (strain MIT 9515).